The chain runs to 205 residues: Probable ADP-ribosylation factor At2g15310 (205 aa).

Gly2 carries the N-myristoyl glycine lipid modification. Residues 24 to 31, 67 to 71, and 126 to 129 contribute to the GTP site; these read GLDGSGKT, DIGGQ, and NKQD.

It belongs to the small GTPase superfamily. Arf family.

It is found in the golgi apparatus. In terms of biological role, GTP-binding protein involved in protein trafficking; may modulate vesicle budding and uncoating within the Golgi apparatus. In Arabidopsis thaliana (Mouse-ear cress), this protein is Probable ADP-ribosylation factor At2g15310.